The primary structure comprises 316 residues: Phospholipase A1 3 (316 aa).

Positions 1-4 are cleaved as a signal peptide; that stretch reads ADDL. Positions 5–14 are excised as a propeptide; the sequence is TTLRNGTLDR. A disulfide bridge links cysteine 20 with cysteine 103. Residue serine 153 is the Nucleophile of the active site. Aspartate 181 functions as the Charge relay system in the catalytic mechanism. Intrachain disulfides connect cysteine 192–cysteine 197 and cysteine 235–cysteine 240. Histidine 242 functions as the Charge relay system in the catalytic mechanism. 3 cysteine pairs are disulfide-bonded: cysteine 257/cysteine 284, cysteine 258/cysteine 309, and cysteine 277/cysteine 282.

The protein belongs to the AB hydrolase superfamily. Lipase family. As to expression, expressed by the venom gland.

The protein localises to the secreted. It catalyses the reaction a 1,2-diacyl-sn-glycero-3-phosphocholine + H2O = a 2-acyl-sn-glycero-3-phosphocholine + a fatty acid + H(+). In terms of biological role, catalyzes the hydrolysis of phosphatidylcholine with phospholipase A1 activity. May act as an allergen and induce hemolytic activity. In Polistes dominula (European paper wasp), this protein is Phospholipase A1 3.